A 487-amino-acid chain; its full sequence is Cytochrome P450 monooxygenase pyvB (487 aa).

The chain crosses the membrane as a helical span at residues 17–37 (PAYSSVVIGALVVCLVCLVWP). Heme is bound at residue Cys-426.

It belongs to the cytochrome P450 family. The cofactor is heme.

It is found in the membrane. It participates in secondary metabolite biosynthesis. Cytochrome P450 monooxygenase; part of the gene cluster that mediates the biosynthesis of pyranoviolin A, a pyranonigrin analog with a C-3 methoxy group. Initially, the PKS portion of pyvA synthesizes C-10 carbon chain from 5 molecules of malonyl-CoA, which is then condensed with the thiolation (T) domain-bound glycine activated by the adenylation (A) domain. The subsequent chain release by Dieckmann condensation (DKC) could be catalyzed by the TE domain present at the C-terminus of pyvA and/or the alpha/beta hydrolase pyvD, installing the tetramic acid moiety. The FAD-dependent monooxygenase pyvC next epoxidizes one of the olefins of the polyketide part, and the epoxide ring-opening induces the dihydro-gamma-pyrone ring formation. The cytochrome P450 monooxygeanse pyvB would be responsible for the 2 consecutive reactions, in which the dihydro-gamma-pyrone is oxidized to gamma-pyrone and C-7 is hydroxylated to yield pyranonigrin F. Finally, the O-methyltransferase pyvH methylates the C-3 hydroxy group to complete the biosynthesis. The chain is Cytochrome P450 monooxygenase pyvB from Aspergillus violaceofuscus (strain CBS 115571).